We begin with the raw amino-acid sequence, 628 residues long: Methionine--tRNA ligase (628 aa).

Residues 9-19 carry the 'HIGH' region motif; that stretch reads YYVNDVPHLGH. Zn(2+) contacts are provided by Cys-124, Cys-127, Cys-142, and Cys-145. The short motif at 294–298 is the 'KMSKS' region element; the sequence is KMSKS. Lys-297 is an ATP binding site. One can recognise a tRNA-binding domain in the interval 527-628; the sequence is DFAKIEIKVA…QLVQNGSLVG (102 aa).

The protein belongs to the class-I aminoacyl-tRNA synthetase family. MetG type 2A subfamily. As to quaternary structure, homodimer. Zn(2+) is required as a cofactor.

The protein resides in the cytoplasm. The enzyme catalyses tRNA(Met) + L-methionine + ATP = L-methionyl-tRNA(Met) + AMP + diphosphate. Its function is as follows. Is required not only for elongation of protein synthesis but also for the initiation of all mRNA translation through initiator tRNA(fMet) aminoacylation. This chain is Methionine--tRNA ligase (metG), found in Campylobacter jejuni subsp. jejuni serotype O:2 (strain ATCC 700819 / NCTC 11168).